The following is a 193-amino-acid chain: Ribosome maturation factor RimM (193 aa).

Residues 112–193 (VDEYYWIDLI…CITVDWGLDF (82 aa)) form the PRC barrel domain.

Belongs to the RimM family. In terms of assembly, binds ribosomal protein uS19.

It localises to the cytoplasm. Functionally, an accessory protein needed during the final step in the assembly of 30S ribosomal subunit, possibly for assembly of the head region. Essential for efficient processing of 16S rRNA. May be needed both before and after RbfA during the maturation of 16S rRNA. It has affinity for free ribosomal 30S subunits but not for 70S ribosomes. This Methylibium petroleiphilum (strain ATCC BAA-1232 / LMG 22953 / PM1) protein is Ribosome maturation factor RimM.